Here is a 206-residue protein sequence, read N- to C-terminus: Apoptosis regulator OPG045 (206 aa).

It belongs to the orthopoxvirus OPG045 family. Homodimer. Interacts with host pro-apoptotic protein BCL2L11 (via BH3 domain). Interacts with host NLRP1. Interacts with host BAK.

The protein resides in the host mitochondrion outer membrane. It localises to the host cytoplasm. Plays a role in evading host innate immune response by inhibiting host inflammasome activation. Interacts with and inhibits NLR-mediated interleukin-1 beta/IL1B production in infected cells. At the host mitochondria outer membrane, interacts with the BH3 domain of host BAK and prevents BAK from binding active BAX. In turn, host apoptosis is inhibited. The polypeptide is Apoptosis regulator OPG045 (OPG045) (Vaccinia virus (strain L-IVP) (VACV)).